The chain runs to 370 residues: MATYKLLLLPGDGIGPEVMAEVKRLVGWLDAQGIAKFETEEGLVGGASYDADKVSITDATMAKALAADAVLFGAVGGPKWDSVPYEVRPEAGLLRLRKDLALYANLRPAICYPALAESSSLKPEVVEGLDIMIVRELTGGVYFGEPKTVTDLGNGQKRAVDTQVYDTYEIERIARVAFDLARKRRNKLTSMEKRNVMKTGVLWHEVVTQVHQREYKDVALQHQLADSGGMQLVRWPKQFDVIVTDNLFGDMLSDIAAMLTGSLGMLPSASLGDTDPKTEKRRALYEPVHGSAPDIAGQGLANPIAMLASFGMALRYSFDRGDLADKLDAAIAAVLAKGLRTADLKSEGATVVSTSQMGEAIVKELEALHA.

NAD(+) is bound at residue 77-90; that stretch reads GPKWDSVPYEVRPE. Residues Arg97, Arg107, Arg135, and Asp226 each contribute to the substrate site. 3 residues coordinate Mg(2+): Asp226, Asp250, and Asp254. 290–302 contributes to the NAD(+) binding site; it reads GSAPDIAGQGLAN.

The protein belongs to the isocitrate and isopropylmalate dehydrogenases family. LeuB type 1 subfamily. In terms of assembly, homodimer. It depends on Mg(2+) as a cofactor. Mn(2+) serves as cofactor.

It is found in the cytoplasm. It carries out the reaction (2R,3S)-3-isopropylmalate + NAD(+) = 4-methyl-2-oxopentanoate + CO2 + NADH. The protein operates within amino-acid biosynthesis; L-leucine biosynthesis; L-leucine from 3-methyl-2-oxobutanoate: step 3/4. Functionally, catalyzes the oxidation of 3-carboxy-2-hydroxy-4-methylpentanoate (3-isopropylmalate) to 3-carboxy-4-methyl-2-oxopentanoate. The product decarboxylates to 4-methyl-2 oxopentanoate. This is 3-isopropylmalate dehydrogenase from Nitrobacter winogradskyi (strain ATCC 25391 / DSM 10237 / CIP 104748 / NCIMB 11846 / Nb-255).